A 491-amino-acid chain; its full sequence is Probable cytosol aminopeptidase (491 aa).

Positions 261 and 266 each coordinate Mn(2+). K273 is an active-site residue. Residues D284, D343, and E345 each contribute to the Mn(2+) site. R347 is an active-site residue.

It belongs to the peptidase M17 family. Requires Mn(2+) as cofactor.

Its subcellular location is the cytoplasm. It catalyses the reaction Release of an N-terminal amino acid, Xaa-|-Yaa-, in which Xaa is preferably Leu, but may be other amino acids including Pro although not Arg or Lys, and Yaa may be Pro. Amino acid amides and methyl esters are also readily hydrolyzed, but rates on arylamides are exceedingly low.. The enzyme catalyses Release of an N-terminal amino acid, preferentially leucine, but not glutamic or aspartic acids.. Presumably involved in the processing and regular turnover of intracellular proteins. Catalyzes the removal of unsubstituted N-terminal amino acids from various peptides. The sequence is that of Probable cytosol aminopeptidase from Geobacter sp. (strain M21).